The chain runs to 144 residues: Large ribosomal subunit protein uL15 (144 aa).

The tract at residues 1–52 (MYLNTISPMKKSNHSSKRKGRGIGSGKGKTSGRGHKGQRSRSGGKVRRGFEG) is disordered. 2 stretches are compositionally biased toward basic residues: residues 11–21 (KSNHSSKRKGR) and 30–47 (TSGR…GKVR).

It belongs to the universal ribosomal protein uL15 family. In terms of assembly, part of the 50S ribosomal subunit.

Its function is as follows. Binds to the 23S rRNA. In Wigglesworthia glossinidia brevipalpis, this protein is Large ribosomal subunit protein uL15.